The following is a 555-amino-acid chain: CTP synthase (555 aa).

An amidoligase domain region spans residues 1-271 (MVKRGKKTKY…DDKLAELFNI (271 aa)). Position 19 (Ser-19) interacts with CTP. Ser-19 contributes to the UTP binding site. ATP contacts are provided by residues 20-25 (SLGKGL) and Asp-77. Residues Asp-77 and Glu-145 each coordinate Mg(2+). Residues 152–154 (DIE), 192–197 (KTKPTQ), and Lys-228 each bind CTP. Residues 192–197 (KTKPTQ) and Lys-228 each bind UTP. The region spanning 297–537 (RIGIVGKYVE…VKAALEHRDA (241 aa)) is the Glutamine amidotransferase type-1 domain. Gly-358 is an L-glutamine binding site. The Nucleophile; for glutamine hydrolysis role is filled by Cys-385. Residues 386 to 389 (LGLQ), Glu-409, and Arg-466 each bind L-glutamine. Residues His-510 and Glu-512 contribute to the active site. A disordered region spans residues 535–555 (RDAQQRQPPAEVKKLAVGKNG).

The protein belongs to the CTP synthase family. Homotetramer.

The enzyme catalyses UTP + L-glutamine + ATP + H2O = CTP + L-glutamate + ADP + phosphate + 2 H(+). It catalyses the reaction L-glutamine + H2O = L-glutamate + NH4(+). It carries out the reaction UTP + NH4(+) + ATP = CTP + ADP + phosphate + 2 H(+). It functions in the pathway pyrimidine metabolism; CTP biosynthesis via de novo pathway; CTP from UDP: step 2/2. Allosterically activated by GTP, when glutamine is the substrate; GTP has no effect on the reaction when ammonia is the substrate. The allosteric effector GTP functions by stabilizing the protein conformation that binds the tetrahedral intermediate(s) formed during glutamine hydrolysis. Inhibited by the product CTP, via allosteric rather than competitive inhibition. Functionally, catalyzes the ATP-dependent amination of UTP to CTP with either L-glutamine or ammonia as the source of nitrogen. Regulates intracellular CTP levels through interactions with the four ribonucleotide triphosphates. This is CTP synthase from Anaeromyxobacter dehalogenans (strain 2CP-1 / ATCC BAA-258).